The primary structure comprises 135 residues: Fatty acid-binding protein 5 (135 aa).

Position 2 is an N-acetylalanine (A2). Phosphoserine is present on S3. Residues 24 to 34 carry the Nuclear localization signal motif; it reads KELGVGLALRK. The 1-eicosanoylglycerol site is built by C43, T56, and R109. A disulfide bridge links C120 with C127. 129-131 is a binding site for 1-eicosanoylglycerol; that stretch reads RVY. 129–131 provides a ligand contact to (9Z,12Z)-octadecadienoate; it reads RVY. Y131 lines the hexadecanoate pocket. Residue Y131 participates in N-eicosanoyl ethanolamine binding. The residue at position 131 (Y131) is a Phosphotyrosine.

This sequence belongs to the calycin superfamily. Fatty-acid binding protein (FABP) family. As to quaternary structure, monomer. In terms of tissue distribution, widely expressed.

It localises to the cytoplasm. It is found in the nucleus. The protein resides in the synapse. The protein localises to the postsynaptic density. Its subcellular location is the secreted. It catalyses the reaction hexadecanoate(out) = hexadecanoate(in). The catalysed reaction is (9Z,12Z)-octadecadienoate(out) = (9Z,12Z)-octadecadienoate(in). The enzyme catalyses (9Z)-octadecenoate(out) = (9Z)-octadecenoate(in). Its function is as follows. Intracellular carrier for long-chain fatty acids and related active lipids, such as endocannabinoids, that regulate the metabolism and actions of the ligands they bind. In addition to the cytosolic transport, selectively delivers specific fatty acids from the cytosol to the nucleus, wherein they activate nuclear receptors. Delivers retinoic acid to the nuclear receptor peroxisome proliferator-activated receptor delta; which promotes proliferation and survival. May also serve as a synaptic carrier of endocannabinoid at central synapses and thus controls retrograde endocannabinoid signaling. Modulates inflammation by regulating PTGES induction via NF-kappa-B activation, and prostaglandin E2 (PGE2) biosynthesis during inflammation. May be involved in keratinocyte differentiation. In Mus musculus (Mouse), this protein is Fatty acid-binding protein 5.